Consider the following 227-residue polypeptide: Ribose-5-phosphate isomerase A (227 aa).

Substrate contacts are provided by residues 26–29 (TGST), 82–85 (DGAD), and 95–98 (KGGG). The active-site Proton acceptor is the glutamate 104. Lysine 122 contacts substrate.

It belongs to the ribose 5-phosphate isomerase family. As to quaternary structure, homodimer.

The catalysed reaction is aldehydo-D-ribose 5-phosphate = D-ribulose 5-phosphate. The protein operates within carbohydrate degradation; pentose phosphate pathway; D-ribose 5-phosphate from D-ribulose 5-phosphate (non-oxidative stage): step 1/1. In terms of biological role, catalyzes the reversible conversion of ribose-5-phosphate to ribulose 5-phosphate. This is Ribose-5-phosphate isomerase A from Streptococcus pyogenes serotype M2 (strain MGAS10270).